Here is a 258-residue protein sequence, read N- to C-terminus: Acetylglutamate kinase (258 aa).

Substrate contacts are provided by residues 41–42 (GG), R63, and N156.

It belongs to the acetylglutamate kinase family. ArgB subfamily. As to quaternary structure, homodimer.

It is found in the cytoplasm. It carries out the reaction N-acetyl-L-glutamate + ATP = N-acetyl-L-glutamyl 5-phosphate + ADP. It functions in the pathway amino-acid biosynthesis; L-arginine biosynthesis; N(2)-acetyl-L-ornithine from L-glutamate: step 2/4. Functionally, catalyzes the ATP-dependent phosphorylation of N-acetyl-L-glutamate. The chain is Acetylglutamate kinase from Geobacillus stearothermophilus (Bacillus stearothermophilus).